The primary structure comprises 260 residues: 2-oxo-tetronate isomerase (260 aa).

Glu-143 (proton donor/acceptor) is an active-site residue. Positions 143, 178, 204, and 240 each coordinate Mg(2+). The active-site Proton donor/acceptor is Glu-240.

It belongs to the hyi family. OtnI subfamily.

It catalyses the reaction 2-dehydro-L-erythronate = 3-dehydro-L-erythronate. It carries out the reaction 2-dehydro-D-erythronate = 3-dehydro-D-erythronate. In terms of biological role, catalyzes the isomerization of 2-oxo-tetronate to 3-oxo-tetronate. The protein is 2-oxo-tetronate isomerase of Cupriavidus necator (strain ATCC 17699 / DSM 428 / KCTC 22496 / NCIMB 10442 / H16 / Stanier 337) (Ralstonia eutropha).